The sequence spans 150 residues: Large ribosomal subunit protein bL9 (150 aa).

The protein belongs to the bacterial ribosomal protein bL9 family.

Functionally, binds to the 23S rRNA. This chain is Large ribosomal subunit protein bL9, found in Acidovorax ebreus (strain TPSY) (Diaphorobacter sp. (strain TPSY)).